The primary structure comprises 231 residues: 5'-methylthioadenosine/S-adenosylhomocysteine nucleosidase (231 aa).

Residue Glu12 is the Proton acceptor of the active site. Residues Gly78, Met153, and Met174–Glu175 contribute to the substrate site. Catalysis depends on Asp198, which acts as the Proton donor.

This sequence belongs to the PNP/UDP phosphorylase family. MtnN subfamily.

The catalysed reaction is S-adenosyl-L-homocysteine + H2O = S-(5-deoxy-D-ribos-5-yl)-L-homocysteine + adenine. The enzyme catalyses S-methyl-5'-thioadenosine + H2O = 5-(methylsulfanyl)-D-ribose + adenine. It carries out the reaction 5'-deoxyadenosine + H2O = 5-deoxy-D-ribose + adenine. It functions in the pathway amino-acid biosynthesis; L-methionine biosynthesis via salvage pathway; S-methyl-5-thio-alpha-D-ribose 1-phosphate from S-methyl-5'-thioadenosine (hydrolase route): step 1/2. Catalyzes the irreversible cleavage of the glycosidic bond in both 5'-methylthioadenosine (MTA) and S-adenosylhomocysteine (SAH/AdoHcy) to adenine and the corresponding thioribose, 5'-methylthioribose and S-ribosylhomocysteine, respectively. Also cleaves 5'-deoxyadenosine, a toxic by-product of radical S-adenosylmethionine (SAM) enzymes, into 5-deoxyribose and adenine. This is 5'-methylthioadenosine/S-adenosylhomocysteine nucleosidase from Bacillus cytotoxicus (strain DSM 22905 / CIP 110041 / 391-98 / NVH 391-98).